We begin with the raw amino-acid sequence, 191 residues long: Protein GrpE (191 aa).

The tract at residues 1–22 is disordered; it reads MKDKHNQEHDHLSQEEPESCEK.

This sequence belongs to the GrpE family. As to quaternary structure, homodimer.

Its subcellular location is the cytoplasm. In terms of biological role, participates actively in the response to hyperosmotic and heat shock by preventing the aggregation of stress-denatured proteins, in association with DnaK and GrpE. It is the nucleotide exchange factor for DnaK and may function as a thermosensor. Unfolded proteins bind initially to DnaJ; upon interaction with the DnaJ-bound protein, DnaK hydrolyzes its bound ATP, resulting in the formation of a stable complex. GrpE releases ADP from DnaK; ATP binding to DnaK triggers the release of the substrate protein, thus completing the reaction cycle. Several rounds of ATP-dependent interactions between DnaJ, DnaK and GrpE are required for fully efficient folding. This Helicobacter pylori (strain Shi470) protein is Protein GrpE.